A 1049-amino-acid polypeptide reads, in one-letter code: DEAD-box ATP-dependent RNA helicase 42 (1049 aa).

Disordered stretches follow at residues 1–279 (MGSS…DEID) and 299–358 (MPAA…DDEE). The span at 64–106 (KERDREERKAREREEREKEKERERARRREERDREERSRRREAA) shows a compositional bias: basic and acidic residues. Over residues 118 to 131 (RKRRRRSSHHHHHH) the composition is skewed to basic residues. 2 stretches are compositionally biased toward basic and acidic residues: residues 161 to 170 (KKEEEQKQLD) and 181 to 199 (KEWQ…REQE). Over residues 201–214 (AGVGTSAAAAAAPA) the composition is skewed to low complexity. Acidic residues predominate over residues 229 to 239 (DGEESDEEGNQ). The segment covering 262–272 (NGGDNANGANA) has biased composition (low complexity). A compositionally biased stretch (basic and acidic residues) spans 304 to 313 (VDDKNDKSAK). Residues 335–358 (EDSDSDYADDEDDEGGSEDEDDEE) show a composition bias toward acidic residues. Residues 424-452 (KTWVQSGLTSKLLDTIKKLGFEKPMSIQA) carry the Q motif motif. Positions 455 to 633 (LPIIMSGRDC…RKVLTKPVEI (179 aa)) constitute a Helicase ATP-binding domain. Residue 468–475 (AKTGSGKT) participates in ATP binding. Residues 581 to 584 (DEAD) carry the DEAD box motif. Residues 644–805 (DITQLVEVRP…AVPEDLKGLA (162 aa)) enclose the Helicase C-terminal domain. The tract at residues 816–868 (TEQAHGTGYGGSGFKFNEEEDEARKSAKKAQAREYGYEEDKSDSDSDEEGGVR) is disordered. A compositionally biased stretch (acidic residues) spans 855-864 (DKSDSDSDEE). The stretch at 1012 to 1037 (TELSVKKAKAELKRVLEDCANHALNL) forms a coiled coil.

Belongs to the DEAD box helicase family. DDX46/PRP5 subfamily.

The enzyme catalyses ATP + H2O = ADP + phosphate + H(+). The sequence is that of DEAD-box ATP-dependent RNA helicase 42 from Oryza sativa subsp. japonica (Rice).